The sequence spans 986 residues: Epidermin biosynthesis protein EpiB (986 aa).

The protein to B.subtilis SpaB and L.lactis NisB.

It localises to the cell membrane. Involved in the post-translational modification of the lantibiotic epidermin. The chain is Epidermin biosynthesis protein EpiB (epiB) from Staphylococcus epidermidis.